The primary structure comprises 317 residues: tRNA pseudouridine synthase B (317 aa).

D47 serves as the catalytic Nucleophile.

Belongs to the pseudouridine synthase TruB family. Type 1 subfamily.

It carries out the reaction uridine(55) in tRNA = pseudouridine(55) in tRNA. In terms of biological role, responsible for synthesis of pseudouridine from uracil-55 in the psi GC loop of transfer RNAs. This Shewanella woodyi (strain ATCC 51908 / MS32) protein is tRNA pseudouridine synthase B.